The chain runs to 374 residues: DNA replication and repair protein RecF (374 aa).

30 to 37 (GPNAQGKS) contributes to the ATP binding site.

The protein belongs to the RecF family.

It is found in the cytoplasm. In terms of biological role, the RecF protein is involved in DNA metabolism; it is required for DNA replication and normal SOS inducibility. RecF binds preferentially to single-stranded, linear DNA. It also seems to bind ATP. The sequence is that of DNA replication and repair protein RecF from Acaryochloris marina (strain MBIC 11017).